We begin with the raw amino-acid sequence, 389 residues long: S-adenosylmethionine synthase (389 aa).

Position 15 (His15) interacts with ATP. Asp17 contacts Mg(2+). Glu43 is a K(+) binding site. Residues Glu56 and Gln99 each contribute to the L-methionine site. A flexible loop region spans residues 99-109 (QSPDIAQGVNE). Residues 166–168 (DAK), 234–235 (RF), Asp243, 249–250 (RK), Ala266, and Lys270 each bind ATP. Asp243 lines the L-methionine pocket. Lys274 contributes to the L-methionine binding site.

The protein belongs to the AdoMet synthase family. In terms of assembly, homotetramer; dimer of dimers. Requires Mg(2+) as cofactor. K(+) is required as a cofactor.

It localises to the cytoplasm. It carries out the reaction L-methionine + ATP + H2O = S-adenosyl-L-methionine + phosphate + diphosphate. The protein operates within amino-acid biosynthesis; S-adenosyl-L-methionine biosynthesis; S-adenosyl-L-methionine from L-methionine: step 1/1. In terms of biological role, catalyzes the formation of S-adenosylmethionine (AdoMet) from methionine and ATP. The overall synthetic reaction is composed of two sequential steps, AdoMet formation and the subsequent tripolyphosphate hydrolysis which occurs prior to release of AdoMet from the enzyme. The protein is S-adenosylmethionine synthase of Laribacter hongkongensis (strain HLHK9).